A 323-amino-acid chain; its full sequence is tRNA U34 carboxymethyltransferase (323 aa).

Carboxy-S-adenosyl-L-methionine is bound by residues Lys-91, Trp-105, Lys-110, Gly-130, 181-182 (IE), Met-196, Tyr-200, and Arg-315.

It belongs to the class I-like SAM-binding methyltransferase superfamily. CmoB family. Homotetramer.

The enzyme catalyses carboxy-S-adenosyl-L-methionine + 5-hydroxyuridine(34) in tRNA = 5-carboxymethoxyuridine(34) in tRNA + S-adenosyl-L-homocysteine + H(+). In terms of biological role, catalyzes carboxymethyl transfer from carboxy-S-adenosyl-L-methionine (Cx-SAM) to 5-hydroxyuridine (ho5U) to form 5-carboxymethoxyuridine (cmo5U) at position 34 in tRNAs. This Edwardsiella ictaluri (strain 93-146) protein is tRNA U34 carboxymethyltransferase.